The primary structure comprises 356 residues: Protein pelota homolog (356 aa).

It belongs to the eukaryotic release factor 1 family. Pelota subfamily. In terms of assembly, monomer. Requires a divalent metal cation as cofactor.

Its subcellular location is the cytoplasm. Functionally, may function in recognizing stalled ribosomes, interact with stem-loop structures in stalled mRNA molecules, and effect endonucleolytic cleavage of the mRNA. May play a role in the release non-functional ribosomes and degradation of damaged mRNAs. Has endoribonuclease activity. The protein is Protein pelota homolog of Aeropyrum pernix (strain ATCC 700893 / DSM 11879 / JCM 9820 / NBRC 100138 / K1).